The following is a 28-amino-acid chain: Small spore coat assembly protein A (28 aa).

A helical membrane pass occupies residues 8–28; sequence GFALLVVLFILLIIVGAAYIY.

The protein belongs to the SscA family.

The protein resides in the spore coat. The protein localises to the membrane. Spore protein involved in the assembly of several components of the spore coat, including CotB, CotG and CotH, and in spore germination. In Bacillus subtilis (strain 168), this protein is Small spore coat assembly protein A.